Here is a 607-residue protein sequence, read N- to C-terminus: MENDEQIDETENFAIGKYAILFVIEVSPSMLDPVDEFTPSSLQMALICAYQLAAQRVITNPSDIMGVLLYGTESSTGRFANQMMLLDIDPPDAERIKSLQSFEKDFQFSKEKFKPCSCQVSLSSVLYHCSVIFTTKAENFEKRLFLITDNDHPAWDATERDIILQRAKDLRDLDIQVHPVFLDPPTHSFRINIFYSDFLYIVYGRQDVSNLVNRGQAQLQHMLNMITALQKPKRAHFHLKMDLGNDVRIGVEAFILLKRLESAKTNWVYAKGERFAVAVPQSKQVSFATKKELKKDEIRRSYSYGGSSVVFGSDELNKVRSFEPPTLRIIGFRDFSTLKPWHCLKPAVFLRPKDDEIIGSGAVFSAIHKKLLASNKIGIAWFVSRPNANPCFVAMLATPGSIHIRDDFELPLGIFLVQLPTADDIRSLPPINPNPISMPSNLIETMQRILRGMELRSYQPGKYNNPSLQWHYKVLQALALDEEIPTDFVDNTLPKYKAIQKRVGEYMGDVNNIVAEYRNDISDKNGIKEEEEDQGPIVKKARIEKSGKPIFAEDDRLKQLYIEGVLDKEIKALKVSQLKDILRDRGLRVSGKKADLLDNLTNYVKKL.

Positions 241 to 452 (MDLGNDVRIG…IETMQRILRG (212 aa)) constitute a Ku domain. Residues 570–604 (IKALKVSQLKDILRDRGLRVSGKKADLLDNLTNYV) enclose the SAP domain.

This sequence belongs to the ku70 family. Heterodimer of pku70 and pku80.

It localises to the nucleus. It is found in the chromosome. Its subcellular location is the telomere. The enzyme catalyses ATP + H2O = ADP + phosphate + H(+). Its function is as follows. Single-stranded DNA-dependent ATP-dependent helicase. Involved in non-homologous end joining (NHEJ) DNA double strand break repair. DNA-binding is sequence-independent but has a high affinity to nicks in double-stranded DNA and to the ends of duplex DNA. Binds to naturally occurring chromosomal ends, and therefore provides chromosomal end protection. Required also for telomere recombination to repair telomeric ends in the absence of telomerase. ku70, of the ku70/ku80 heterodimer, binds to the stem loop of tlc1, the RNA component of telomerase. Required for mating-type switching. Involved in telomere maintenance. Interacts with telomeric repeats and subtelomeric sequences thereby controlling telomere length and protecting against subtelomeric rearrangement. Maintains telomeric chromatin, which is involved in silencing the expression of genes located at the telomere. In Schizosaccharomyces pombe (strain 972 / ATCC 24843) (Fission yeast), this protein is ATP-dependent DNA helicase II subunit 1 (pku70).